A 410-amino-acid chain; its full sequence is Protein BTN2 (410 aa).

Disordered stretches follow at residues 223-264 and 276-410; these read INEP…TKED and MQEE…IEEI. Basic and acidic residues-rich tracts occupy residues 233–264 and 276–311; these read SKID…TKED and MQEE…KESL. Positions 243-330 form a coiled coil; the sequence is NMSESLKEEE…QQKKLQNSKS (88 aa). Positions 334–362 are enriched in low complexity; that stretch reads SEIEASNKNNNSNSGSAESDNESINSDSD. The segment covering 364 to 373 has biased composition (polar residues); sequence TLDFSVSGNT.

As to quaternary structure, interacts with RHB1, IST2, TDA3 and YIF1.

Its subcellular location is the cytoplasm. The protein localises to the late endosome. In terms of biological role, V-SNARE binding protein that facilitates specific protein retrieval from a late endosome to the Golgi. Modulates the rate of arginine uptake. Involved in pH homeostasis. Required for the correct localization of IST2. May be involved in ion homeostasis together with IST2. The protein is Protein BTN2 (BTN2) of Saccharomyces cerevisiae (strain ATCC 204508 / S288c) (Baker's yeast).